A 623-amino-acid polypeptide reads, in one-letter code: (-)-alpha-pinene synthase 1, chloroplastic (623 aa).

The transit peptide at 1–52 (MDLISVLPSASKSCVCLHKPLSSSTHKLKPFCKTIRILGMPRRWKFAGPSMS) directs the protein to the chloroplast. 3 residues coordinate Mg(2+): Asp-374, Asp-378, and Asp-526. Positions 374–378 (DDMYD) match the DDXXD motif motif.

It belongs to the terpene synthase family. Tpsd subfamily. Mg(2+) is required as a cofactor. Mn(2+) serves as cofactor.

Its subcellular location is the plastid. The protein localises to the chloroplast. It carries out the reaction (2E)-geranyl diphosphate = (1S,5S)-alpha-pinene + diphosphate. The catalysed reaction is (2E)-geranyl diphosphate = (1S,5S)-beta-pinene + diphosphate. The enzyme catalyses (2E)-geranyl diphosphate = (-)-beta-phellandrene + diphosphate. Its pathway is terpene metabolism; oleoresin biosynthesis. It participates in secondary metabolite biosynthesis; terpenoid biosynthesis. Monoterpene synthase (TPS) involved in the biosynthesis of monoterpene natural products included in conifer oleoresin secretions and volatile emissions; these compounds contribute to biotic and abiotic stress defense against herbivores and pathogens. Catalyzes the conversion of (2E)-geranyl diphosphate (GPP) to (-)-alpha-pinene and (-)-beta-pinene, and, to a lower extent, to (-)-beta-phellandrene. This chain is (-)-alpha-pinene synthase 1, chloroplastic, found in Pinus banksiana (Jack pine).